A 461-amino-acid chain; its full sequence is uncharacterized protein (461 aa).

Positions 1 to 19 (MEKCSHESGRHSAENDGKY) are enriched in basic and acidic residues. The segment at 1–21 (MEKCSHESGRHSAENDGKYDI) is disordered.

It belongs to the CapA family.

Could be involved in the biosynthesis of a cell wall component. This is an uncharacterized protein from Sinorhizobium fredii (strain NBRC 101917 / NGR234).